We begin with the raw amino-acid sequence, 144 residues long: Grifin (144 aa).

In terms of domain architecture, Galectin spans 5–133 (SKAFCAGGLA…DHCLAQVELA (129 aa)). Residue Ser-138 is modified to Phosphoserine.

Homodimer. As to expression, not detected in lens.

The protein is Grifin (GRIFIN) of Homo sapiens (Human).